The sequence spans 299 residues: Oxygen-dependent coproporphyrinogen-III oxidase (299 aa).

Ser92 provides a ligand contact to substrate. A divalent metal cation is bound by residues His96 and His106. The active-site Proton donor is the His106. 108–110 (NVR) provides a ligand contact to substrate. The a divalent metal cation site is built by His145 and His175. The interval 239–274 (YVEFNLVYDRGTLFGLQSGGRAESILMSLPPRVRWE) is important for dimerization. Position 257–259 (257–259 (GGR)) interacts with substrate.

This sequence belongs to the aerobic coproporphyrinogen-III oxidase family. Homodimer. A divalent metal cation serves as cofactor.

The protein resides in the cytoplasm. It catalyses the reaction coproporphyrinogen III + O2 + 2 H(+) = protoporphyrinogen IX + 2 CO2 + 2 H2O. It participates in porphyrin-containing compound metabolism; protoporphyrin-IX biosynthesis; protoporphyrinogen-IX from coproporphyrinogen-III (O2 route): step 1/1. Involved in the heme biosynthesis. Catalyzes the aerobic oxidative decarboxylation of propionate groups of rings A and B of coproporphyrinogen-III to yield the vinyl groups in protoporphyrinogen-IX. The sequence is that of Oxygen-dependent coproporphyrinogen-III oxidase from Xanthomonas oryzae pv. oryzae (strain MAFF 311018).